The primary structure comprises 348 residues: Ion-translocating oxidoreductase complex subunit D (348 aa).

A run of 5 helical transmembrane segments spans residues 15-35 (LTAKFMLWVMVAMLPALGMQA), 36-56 (YFFGYGVFIQVFIALLLAVAI), 67-87 (LTAFYVADLSGVLTALILAIS), 88-108 (IPPYAPYWIIVIGIIVALLLA), and 125-145 (VAYALLLVSFPVQMTGWLVPI). FMN phosphoryl threonine is present on threonine 186. 5 helical membrane passes run 212-232 (LFANGWWQINLAFLAGGLLLI), 241-261 (IPAAMLGMFALLSGLTDLLLP), 265-285 (LNVVSQLFSGAMMFGAFFIAT), 298-318 (LIFGGLIGLFVYLIRYYGNYP), and 320-340 (AVAFSVLLANICVPLIDHYTQ).

It belongs to the NqrB/RnfD family. The complex is composed of six subunits: RnfA, RnfB, RnfC, RnfD, RnfE and RnfG. The cofactor is FMN.

The protein localises to the cell inner membrane. Its function is as follows. Part of a membrane-bound complex that couples electron transfer with translocation of ions across the membrane. This chain is Ion-translocating oxidoreductase complex subunit D, found in Actinobacillus pleuropneumoniae serotype 3 (strain JL03).